A 1247-amino-acid polypeptide reads, in one-letter code: Lon protease homolog 2, peroxisomal (1247 aa).

Positions 22–402 (LPTYTLDSNL…LINEMILQLI (381 aa)) constitute a Lon N-terminal domain. Disordered regions lie at residues 76 to 103 (SGNS…ETYH), 447 to 503 (TKNR…DVDD), and 626 to 655 (DQSD…SPTS). Residues 459-477 (PGPASSSGPSFSNGKSSPG) are compositionally biased toward low complexity. Over residues 626-639 (DQSDKSQPIKDNSK) the composition is skewed to basic and acidic residues. An ATP-binding site is contributed by 721–728 (GPPGTGKT). The Lon proteolytic domain occupies 989-1230 (TVGVGVVHGL…YDIIKIVWNE (242 aa)). Active-site residues include S1099 and K1142.

It belongs to the peptidase S16 family.

Its subcellular location is the peroxisome matrix. The enzyme catalyses Hydrolysis of proteins in presence of ATP.. In terms of biological role, ATP-dependent serine protease that mediates the selective degradation of misfolded and unassembled polypeptides in the peroxisomal matrix. Necessary for type 2 peroxisome targeting signal (PTS2)-containing protein processing and facilitates peroxisome matrix protein import. The sequence is that of Lon protease homolog 2, peroxisomal from Candida dubliniensis (strain CD36 / ATCC MYA-646 / CBS 7987 / NCPF 3949 / NRRL Y-17841) (Yeast).